The primary structure comprises 553 residues: Arginine--tRNA ligase (553 aa).

The short motif at 130-140 (ANPTGPVHLGG) is the 'HIGH' region element.

The protein belongs to the class-I aminoacyl-tRNA synthetase family. Monomer.

It is found in the cytoplasm. The catalysed reaction is tRNA(Arg) + L-arginine + ATP = L-arginyl-tRNA(Arg) + AMP + diphosphate. This is Arginine--tRNA ligase from Saccharopolyspora erythraea (strain ATCC 11635 / DSM 40517 / JCM 4748 / NBRC 13426 / NCIMB 8594 / NRRL 2338).